Here is a 550-residue protein sequence, read N- to C-terminus: Glutamine--tRNA ligase (550 aa).

A 'HIGH' region motif is present at residues 34-44 (PEPNGYLHLGH). Residues 35-37 (EPN) and 41-47 (HLGHAKS) contribute to the ATP site. 2 residues coordinate L-glutamine: Asp67 and Tyr212. ATP contacts are provided by residues Thr231, 261–262 (RL), and 269–271 (LSK). The 'KMSKS' region signature appears at 268-272 (VLSKR).

It belongs to the class-I aminoacyl-tRNA synthetase family. In terms of assembly, monomer.

It is found in the cytoplasm. It carries out the reaction tRNA(Gln) + L-glutamine + ATP = L-glutaminyl-tRNA(Gln) + AMP + diphosphate. The protein is Glutamine--tRNA ligase of Buchnera aphidicola subsp. Baizongia pistaciae (strain Bp).